Consider the following 601-residue polypeptide: Glutamyl-tRNA(Gln) amidotransferase subunit B, mitochondrial (601 aa).

The N-terminal 55 residues, 1-55 (MLRPWLRQCPRATRSLACPQCHLPRPQTARRALRPLPALSLSHPIRSLQTTTTES), are a transit peptide targeting the mitochondrion.

The protein belongs to the GatB/GatE family. GatB subfamily. In terms of assembly, subunit of the heterotrimeric GatCAB amidotransferase (AdT) complex, composed of A, B and C subunits.

The protein localises to the mitochondrion. The catalysed reaction is L-glutamyl-tRNA(Gln) + L-glutamine + ATP + H2O = L-glutaminyl-tRNA(Gln) + L-glutamate + ADP + phosphate + H(+). In terms of biological role, allows the formation of correctly charged Gln-tRNA(Gln) through the transamidation of misacylated Glu-tRNA(Gln) in the mitochondria. The reaction takes place in the presence of glutamine and ATP through an activated gamma-phospho-Glu-tRNA(Gln). The sequence is that of Glutamyl-tRNA(Gln) amidotransferase subunit B, mitochondrial from Aspergillus niger (strain ATCC MYA-4892 / CBS 513.88 / FGSC A1513).